Consider the following 386-residue polypeptide: Methylthioribose-1-phosphate isomerase (386 aa).

Asp-261 (proton donor) is an active-site residue.

Belongs to the eIF-2B alpha/beta/delta subunits family. MtnA subfamily.

The protein resides in the cytoplasm. Its subcellular location is the nucleus. It carries out the reaction 5-(methylsulfanyl)-alpha-D-ribose 1-phosphate = 5-(methylsulfanyl)-D-ribulose 1-phosphate. It functions in the pathway amino-acid biosynthesis; L-methionine biosynthesis via salvage pathway; L-methionine from S-methyl-5-thio-alpha-D-ribose 1-phosphate: step 1/6. Its function is as follows. Catalyzes the interconversion of methylthioribose-1-phosphate (MTR-1-P) into methylthioribulose-1-phosphate (MTRu-1-P). The chain is Methylthioribose-1-phosphate isomerase from Paracoccidioides brasiliensis (strain Pb03).